The following is a 124-amino-acid chain: Small ribosomal subunit protein uS12cz/uS12cy (124 aa).

This sequence belongs to the universal ribosomal protein uS12 family. Part of the 30S ribosomal subunit.

The protein resides in the plastid. With S4 and S5 plays an important role in translational accuracy. Located at the interface of the 30S and 50S subunits. The sequence is that of Small ribosomal subunit protein uS12cz/uS12cy (rps12-A) from Epifagus virginiana (Beechdrops).